A 548-amino-acid chain; its full sequence is MVEILDYTKALEVLKEYPSGDGLHVDTLLDSDNHGALTYNDFLILPGSITFSAADVSLDTKVTRRFTIKAPLLSSPMDTVTEHNMAIHMALLGGLGVIHNNCPPDDQAEMVRKVKRYENGFILDPVVLSPSTTVAEAKELKTKWNFGGFPVTGKTHYLSSFGKLASSDSFSLLEKGTLHSKLLGIVTSRDIQFHKTPEDPVTAVMSTELVTAPAGTTLAEANEVLRSSKKGKLPIVDKDGLLVSLLSRSDLMKNIHYPLASKLPSKQLLCAAAISTHDADKVRLQKLVDAGLDIVVVDSSQGNSMYQIAMIKWIKSTFPDIDIIAGNIVTREQAAALIAAGADGLRIGMGSGSACITQEVMAVGRPQAASVRSVSAFAARFGVPTIADGGVQNLGHIVKGLALGASAVMMGSLLAGTTESPGEYYVSNEGQLVKAFRGMGSIAVMEDKGKSGGGKNAGASRYFSENDKVKVAQGVAGSVVDRGSITQYVPYLVAGIQHSLQDIGVQDLEALHNGVNNGQVRFEMRSASAQTEGNVHGLHSHEKKLYSS.

2 consecutive CBS domains span residues 121-201 and 205-261; these read FILD…EDPV and MSTE…PLAS. NAD(+) is bound by residues 298 to 300 and 348 to 350; these read DSS and GMG. K(+)-binding residues include glycine 350 and glycine 352. Serine 353 lines the IMP pocket. Residue cysteine 355 coordinates K(+). Cysteine 355 acts as the Thioimidate intermediate in catalysis. IMP contacts are provided by residues 388 to 390 and 411 to 412; these read DGG and GS. The Proton acceptor role is filled by arginine 461. Glutamine 473 lines the IMP pocket. Residues 527-548 form a disordered region; the sequence is ASAQTEGNVHGLHSHEKKLYSS. Residue serine 528 coordinates K(+). Residues 539-548 show a composition bias toward basic and acidic residues; sequence HSHEKKLYSS.

It belongs to the IMPDH/GMPR family. Homotetramer. It depends on K(+) as a cofactor.

The protein localises to the cytoplasm. The catalysed reaction is IMP + NAD(+) + H2O = XMP + NADH + H(+). It participates in purine metabolism; XMP biosynthesis via de novo pathway; XMP from IMP: step 1/1. With respect to regulation, mycophenolic acid (MPA) is a non-competitive inhibitor that prevents formation of the closed enzyme conformation by binding to the same site as the amobile flap. In contrast, mizoribine monophosphate (MZP) is a competitive inhibitor that induces the closed conformation. MPA is a potent inhibitor of mammalian IMPDHs but a poor inhibitor of the bacterial enzymes. MZP is a more potent inhibitor of bacterial IMPDH. Catalyzes the conversion of inosine 5'-phosphate (IMP) to xanthosine 5'-phosphate (XMP), the first committed and rate-limiting step in the de novo synthesis of guanine nucleotides, and therefore plays an important role in the regulation of cell growth. Part of the gene cluster that mediates the biosynthesis of mycophenolic acid (MPA), the first isolated antibiotic natural product in the world. Does not play a role in the biosynthesis of MPA, but is involved in self resistance to MPA, since MPA acts as an inhibitor of IMP dehydrogenases. The sequence is that of Inosine-5'-monophosphate dehydrogenase from Penicillium brevicompactum.